The sequence spans 396 residues: Seminal vesicle major clotting proteins (396 aa).

An N-terminal signal peptide occupies residues 1 to 21; it reads MKSTIFFILSLLLMLENQAAG. The interval 45-178 is disordered; that stretch reads MEEAVSGSGL…ASSVDHRKKG (134 aa). Residues 60–152 show a composition bias toward basic and acidic residues; the sequence is RGSDREESVG…RVSVRHERVE (93 aa). 3 SVP-3/-4 repeat repeats span residues 65–88, 89–112, and 113–136; these read EESV…RSSV, EEPE…RHNV, and EEPE…RHSA. Residues 137-157 form an SVP-3/-4 repeat; truncated repeat; the sequence is EEPEGERVSVRHERVEKTHKR. Positions 177 to 192 are excised as a propeptide; it reads KGHIRFKRQDPIAALA. SVP-1 clotting repeat units follow at residues 194–217, 218–241, 242–265, 266–289, 290–313, 314–337, 338–361, and 362–385; these read IEGQ…ERFS, VKGQ…ERFS, VTGQ…ERFS, MTGQ…ERFS, and VSGQ…SGFS. The tract at residues 194–396 is 9 X tandem repeats of SVP-1 like motif; it reads IEGQDAVKDS…KGQGSLKGLI (203 aa). A disordered region spans residues 377–396; the sequence is QESVQSGFSVKGQGSLKGLI. One copy of the SVP-1 clotting 9; truncated repeat lies at 386–396; that stretch reads VKGQGSLKGLI.

To the SVP-2 precursor, particularly in regions where protein processing must occur. Post-translationally, SVP-3 may be a post-translationally modified form of SVP-4. In terms of processing, covalent clotting of SVP-1 is catalyzed by a transglutaminase secreted by the anterior prostate through the formation of gamma-glutamyl-epsilon-lysine cross-links. The conserved 2 Lys and 1 Gln residues per functional unit seem to be the residues involved in the formation of those cross-links.

The protein resides in the secreted. Its function is as follows. SVP-1 serves as substrate in the formation of the copulatory plug. SVP-3 and SVP-4 may also contribute to the clot. The protein is Seminal vesicle major clotting proteins of Cavia porcellus (Guinea pig).